The following is a 1372-amino-acid chain: Collagen alpha-2(I) chain (1372 aa).

The signal sequence occupies residues 1-22 (MLSFVDTRTLLLLAVTSCLATC). Glutamine 23 is subject to Pyrrolidone carboxylic acid. The propeptide at 23–85 (QYLQSGSVRK…PPGLTGNFAA (63 aa)) is N-terminal propeptide. The tract at residues 28–1135 (GSVRKGPTGD…DQPRSQPSLR (1108 aa)) is disordered. Residues 59 to 77 (MGPPGPPGSPGPPGSPAPP) are compositionally biased toward pro residues. Position 90 is an allysine (lysine 90). A compositionally biased stretch (low complexity) spans 95–146 (GPGPMGLMGPRGPPGAVGAPGPQGFQGPAGEPGEPGQTGPAGPRGPAGSPGK). The segment covering 147–161 (AGEDGHPGKPGRPGE) has biased composition (basic and acidic residues). 5-hydroxylysine; alternate is present on lysine 183. Lysine 183 carries O-linked (Gal...) hydroxylysine; alternate glycosylation. Composition is skewed to low complexity over residues 231 to 260 (VGAP…SAGP), 285 to 299 (AGPR…LSGP), 306 to 327 (PGTN…AGAP), 336 to 351 (PGPA…RGLV), 390 to 416 (PGEA…LPGA), 476 to 495 (LPGI…RGEA), and 519 to 537 (PGLA…NGAQ). Residues 544 to 553 (GVQGGKGEQG) show a composition bias toward gly residues. The span at 600–639 (PGESGAAGPSGPIGSRGPSGAPGPDGNKGEAGAVGAPGSA) shows a compositional bias: low complexity. Positions 640-649 (GASGPGGLPG) are enriched in gly residues. 2 stretches are compositionally biased toward low complexity: residues 681-716 (RGIP…PRGS) and 725-743 (PAGP…QPGA). The segment covering 744-753 (KGEKGTKGPK) has biased composition (basic and acidic residues). Residues 755 to 771 (ENGIVGPTGSVGAAGPS) are compositionally biased toward low complexity. The span at 781–790 (GSRGDGGPPG) shows a compositional bias: gly residues. Composition is skewed to low complexity over residues 792 to 801 (TGFPGAAGRT), 855 to 882 (SGEP…LGLP), 905 to 927 (ISGP…NGAP), 957 to 978 (PGSI…VGPA), and 987 to 1007 (PGPA…PSGP). The span at 1011-1022 (RGDKGEPGDKGH) shows a compositional bias: basic and acidic residues. A compositionally biased stretch (pro residues) spans 1095-1107 (AGPPGPPGPPGPP). The propeptide at 1126–1372 (DQPRSQPSLR…RVEVGPVCFK (247 aa)) is C-terminal propeptide. A Fibrillar collagen NC1 domain is found at 1139–1372 (YEVDATLKSL…RVEVGPVCFK (234 aa)). 3 disulfide bridges follow: cysteine 1169–cysteine 1201, cysteine 1209–cysteine 1370, and cysteine 1278–cysteine 1323. Ca(2+) contacts are provided by aspartate 1187, asparagine 1189, glutamine 1190, cysteine 1192, and aspartate 1195. The N-linked (GlcNAc...) asparagine glycan is linked to asparagine 1273.

Belongs to the fibrillar collagen family. In terms of assembly, trimers of one alpha 2(I) and two alpha 1(I) chains. Interacts (via C-terminus) with TMEM131 (via PapD-L domain); the interaction is direct and is involved in assembly and TRAPPIII ER-to-Golgi transport complex-dependent secretion of collagen. Post-translationally, prolines at the third position of the tripeptide repeating unit (G-X-Y) are hydroxylated in some or all of the chains. Expressed in kidney glomeruli.

Its subcellular location is the secreted. The protein localises to the extracellular space. The protein resides in the extracellular matrix. Functionally, type I collagen is a member of group I collagen (fibrillar forming collagen). This chain is Collagen alpha-2(I) chain (Col1a2), found in Mus musculus (Mouse).